The chain runs to 613 residues: Pentatricopeptide repeat-containing protein At2g02750 (613 aa).

PPR repeat units lie at residues 30–64, 65–99, 101–126, 128–162, 163–193, 194–228, 230–264, 265–295, 297–331, 332–366, 367–401, 402–432, 435–469, 470–500, and 506–539; these read NKFT…GFFV, DVFT…GIAS, NAAV…ARVS, SGMN…GFEM, EVYV…VPHK, SVVT…SSEE, NDVT…EFQF, ETMV…LKDT, NLIS…GLKP, DSAT…VMVP, SLKC…AAER, DIFV…FEPK, DPVF…KVEP, SLAT…MQEE, and STEH…PSSS. The tract at residues 540–613 is type E motif; degenerate; it reads VYSSLLGSCR…VKLPGLSLSG (74 aa).

Belongs to the PPR family. PCMP-E subfamily.

This is Pentatricopeptide repeat-containing protein At2g02750 (PCMP-E22) from Arabidopsis thaliana (Mouse-ear cress).